The sequence spans 369 residues: Deoxyhypusine synthase (369 aa).

At Ser-78 the chain carries Phosphoserine. NAD(+) contacts are provided by residues 105 to 109 (SNLIS), 131 to 133 (TAG), Glu-137, and Asp-238. 136–137 (EE) contacts spermidine. Spermidine is bound at residue Asp-243. NAD(+) is bound at residue Gly-283. Position 288 (His-288) interacts with spermidine. 308-309 (TA) contributes to the NAD(+) binding site. Spermidine contacts are provided by residues 314 to 316 (GSD) and 323 to 329 (EAVSWGK). Residue Lys-329 is the Nucleophile of the active site. An NAD(+)-binding site is contributed by 342–343 (DA).

It belongs to the deoxyhypusine synthase family. As to quaternary structure, homotetramer formed by a dimer of dimers. Requires NAD(+) as cofactor.

The catalysed reaction is [eIF5A protein]-L-lysine + spermidine = [eIF5A protein]-deoxyhypusine + propane-1,3-diamine. It participates in protein modification; eIF5A hypusination. Functionally, catalyzes the NAD-dependent oxidative cleavage of spermidine and the subsequent transfer of the butylamine moiety of spermidine to the epsilon-amino group of a critical lysine residue of the eIF-5A precursor protein to form the intermediate deoxyhypusine residue. This is the first step of the post-translational modification of that lysine into an unusual amino acid residue named hypusine. Hypusination is unique to mature eIF-5A factor and is essential for its function. This is Deoxyhypusine synthase (DHPS) from Homo sapiens (Human).